The following is a 95-amino-acid chain: Large ribosomal subunit protein uL23 (95 aa).

The protein belongs to the universal ribosomal protein uL23 family. In terms of assembly, part of the 50S ribosomal subunit. Contacts protein L29, and trigger factor when it is bound to the ribosome.

In terms of biological role, one of the early assembly proteins it binds 23S rRNA. One of the proteins that surrounds the polypeptide exit tunnel on the outside of the ribosome. Forms the main docking site for trigger factor binding to the ribosome. This chain is Large ribosomal subunit protein uL23, found in Desulfatibacillum aliphaticivorans.